An 87-amino-acid chain; its full sequence is Small ribosomal subunit protein uS15c (87 aa).

This sequence belongs to the universal ribosomal protein uS15 family. As to quaternary structure, part of the 30S ribosomal subunit.

The protein localises to the plastid. It is found in the chloroplast. The polypeptide is Small ribosomal subunit protein uS15c (rps15) (Illicium oligandrum (Star anise)).